The primary structure comprises 138 residues: Large ribosomal subunit protein uL16c (138 aa).

The protein belongs to the universal ribosomal protein uL16 family. Part of the 50S ribosomal subunit.

The protein resides in the plastid. Its subcellular location is the chloroplast. The protein is Large ribosomal subunit protein uL16c of Chaetosphaeridium globosum (Charophycean green alga).